Consider the following 525-residue polypeptide: Calcium uptake protein 1 homolog, mitochondrial (525 aa).

The disordered stretch occupies residues 109–146; the sequence is ADAGQRPSSAADVNGEDKSSESESEDSEDEEAGSDLHL. The span at 130 to 141 shows a compositional bias: acidic residues; it reads SESEDSEDEEAG. 2 consecutive EF-hand domains span residues 268-303 and 459-494; these read ISRR…VRQQ and LSDH…RVQR. 10 residues coordinate Ca(2+): D281, N283, D285, D287, E292, D472, N474, D476, Q478, and E483.

Belongs to the MICU1 family. MICU1 subfamily.

The protein resides in the mitochondrion intermembrane space. It is found in the mitochondrion inner membrane. In terms of biological role, calcium sensor of the mitochondrial calcium uniporter (MCU) channel, which senses calcium level via its EF-hand domains. At low calcium levels, MICU1 occludes the pore of the MCU channel, preventing mitochondrial calcium uptake. At higher calcium levels, calcium-binding to MICU1 induces a conformational change that weakens MCU-MICU1 interactions and moves MICU1 away from the pore, allowing calcium permeation through the MCU channel. Also required to protect against manganese toxicity by preventing manganese uptake by MCU. During development, required in alpha/beta or gamma mushroom body neurons to support olfactory intermediate-term memory in the adult. The polypeptide is Calcium uptake protein 1 homolog, mitochondrial (Drosophila melanogaster (Fruit fly)).